Here is a 332-residue protein sequence, read N- to C-terminus: Centrosomal AT-AC splicing factor (332 aa).

The tract at residues 1–169 (MAPAQRCPLC…QSRQEVVRSV (169 aa)) is required for centrosome location. K31 carries the post-translational modification N6-acetyllysine; by NAT10. A coiled-coil region spans residues 137-168 (LDSYEEKEDKVIKEMAAQIREVEQSRQEVVRS). Residues 169-213 (VLEPQAVPDPEEGSSAPRSWKGMNSQVASSLQQPSNLDLPPAPEL) are disordered. Polar residues predominate over residues 190 to 204 (GMNSQVASSLQQPSN).

As to quaternary structure, interacts with SASS6; the interaction increases with CENATAC acetylation. In terms of processing, acetylated. Acetylation oscillates throughout the cell cycle, and the acetylation state at Lys-31 is regulated by the deacetylase SIRT1 and the acetyltransferase NAT10. Deacetylated CENATAC is responsible for its centrosome targeting, and acetylated CENATAC promotes SASS6 degradation by enhancing the binding affinity of SASS6 for APC/C E3 ubiquitin-protein ligase complex/FZR1.

The protein localises to the cytoplasm. Its subcellular location is the cytoskeleton. The protein resides in the microtubule organizing center. It is found in the centrosome. Functionally, component of the minor spliceosome that promotes splicing of a specific, rare minor intron subtype. Negative regulator of centrosome duplication. Constrains centriole number by modulating the degradation of the centrosome-duplication-associated protein SASS6 in an acetylation-dependent manner. SIRT1 deacetylates CENATAC in G1 phase, allowing for SASS6 accumulation on the centrosome and subsequent procentriole assembly. The CENATAC acetylation level is restored in mitosis by NAT10, promoting SASS6 proteasome degradation by facilitating SASS6 binding to APC/C E3 ubiquitin-protein ligase complex/FZR1. The protein is Centrosomal AT-AC splicing factor of Homo sapiens (Human).